A 1149-amino-acid polypeptide reads, in one-letter code: Translocase of chloroplast 126, chloroplastic (1149 aa).

Disordered regions lie at residues 1-206 (MDAL…GKEL), 219-292 (NMPN…RELT), and 315-431 (LELK…VNPS). The segment covering 131-142 (LYYDDYGDDGEV) has biased composition (acidic residues). Residues 152–168 (TSSSSSSSSSECSSSAS) are compositionally biased toward low complexity. Composition is skewed to acidic residues over residues 271–280 (YDQEGEDADS) and 335–357 (GESD…DEHE). Positions 406–429 (TAATDTQSSNAASSTQVAGTTDVN) are enriched in polar residues. Positions 514–743 (DFACTILVLG…KLQDTAAPGR (230 aa)) constitute an AIG1-type G domain. Positions 523–530 (GKTGVGKS) are G1. 526 to 531 (GVGKSA) contacts GTP. Ser-530 lines the Mg(2+) pocket. Residues 550 to 554 (STTNV) are G2. The tract at residues 570-573 (DTPG) is G3. The interval 642 to 645 (THAS) is G4. GTP contacts are provided by residues His-643 and 691–692 (EN). Positions 691 to 693 (ENH) are G5. Disordered regions lie at residues 769–800 (KLPD…LPPF) and 833–869 (KQHR…DEAG). The segment covering 773–796 (EQLDESDESDDDEEDEEEGDEYDD) has biased composition (acidic residues). Basic and acidic residues-rich tracts occupy residues 833–842 (KQHREQLQRR) and 852–862 (MRKEGLSHPAD). Residues 1123-1144 (MVLIGIVPILRSLINCRFGFGG) form a helical membrane-spanning segment.

The protein belongs to the TRAFAC class TrmE-Era-EngA-EngB-Septin-like GTPase superfamily. AIG1/Toc34/Toc159-like paraseptin GTPase family. TOC159 subfamily. In terms of assembly, part of the TOC core complex. Requires Mg(2+) as cofactor.

It is found in the plastid. Its subcellular location is the chloroplast outer membrane. Functionally, GTPase involved in protein precursor import into chloroplasts. Seems to recognize chloroplast-destined precursor proteins and regulate their presentation to the translocation channel through GTP hydrolysis. Probably specialized in the import of nuclear encoded non-photosynthetic preproteins from the cytoplasm to the chloroplast. The sequence is that of Translocase of chloroplast 126, chloroplastic from Physcomitrium patens (Spreading-leaved earth moss).